The primary structure comprises 64 residues: U6-theraphotoxin-Cg1a (64 aa).

Residues 1 to 20 (MTRKILAVLLVFTLVACNNA) form the signal peptide. A propeptide spanning residues 21 to 38 (EKYSETDVEDSPMIQERR) is cleaved from the precursor. Cystine bridges form between Cys39-Cys55, Cys46-Cys58, and Cys54-Cys63.

It belongs to the neurotoxin 36 family. 02 subfamily. Expressed by the venom gland.

It is found in the secreted. Its function is as follows. Probable ion channel inhibitor. The protein is U6-theraphotoxin-Cg1a of Chilobrachys guangxiensis (Chinese earth tiger tarantula).